A 274-amino-acid polypeptide reads, in one-letter code: Copper chaperone for superoxide dismutase (274 aa).

The 64-residue stretch at 11 to 74 folds into the HMA domain; that stretch reads LCTLEFAVQM…LLEGTGRQAV (64 aa). Cu cation-binding residues include Cys22 and Cys25. A Glycyl lysine isopeptide (Lys-Gly) (interchain with G-Cter in ubiquitin) cross-link involves residue Lys76. The tract at residues 88 to 234 is superoxide dismutase-like; it reads AAVAILGGPG…LACGIIARSA (147 aa). A disulfide bridge connects residues Cys141 and Cys227. Positions 147, 155, 164, and 167 each coordinate Zn(2+). Residues Lys189, Lys216, and Lys241 each participate in a glycyl lysine isopeptide (Lys-Gly) (interchain with G-Cter in ubiquitin) cross-link. The Cu cation site is built by Cys244 and Cys246. The residue at position 267 (Ser267) is a Phosphoserine.

This sequence in the C-terminal section; belongs to the Cu-Zn superoxide dismutase family. Homodimer, and heterodimer with SOD1. Interacts with COMMD1. Interacts with XIAP/BIRC4. Interacts with SLC31A1(via C-terminal domain); this interaction is Cu(1+)-mediated. The heterodimer CCS:SOD1 interacts with SLC31A1; this heterotrimer is Cu(1+)-mediated and its maintenance is regulated through SOD1 activation. The cofactor is Cu(2+). Zn(2+) is required as a cofactor. Post-translationally, ubiquitinion by XIAP/BIRC4 leads to enhancement of its chaperone activity toward its physiologic target, SOD1, rather than proteasomal degradation. XIAP/BIRC4 preferentially ubiquitinates at Lys-241. As to expression, ubiquitous.

It is found in the cytoplasm. Delivers copper to copper zinc superoxide dismutase (SOD1). This Homo sapiens (Human) protein is Copper chaperone for superoxide dismutase.